A 153-amino-acid chain; its full sequence is Large ribosomal subunit protein uL30 (153 aa).

It belongs to the universal ribosomal protein uL30 family. In terms of assembly, part of the 50S ribosomal subunit.

This chain is Large ribosomal subunit protein uL30, found in Metallosphaera sedula (strain ATCC 51363 / DSM 5348 / JCM 9185 / NBRC 15509 / TH2).